The sequence spans 187 residues: Probable chorismate pyruvate-lyase (187 aa).

3 residues coordinate substrate: Arg-76, Leu-114, and Glu-173.

This sequence belongs to the UbiC family.

It is found in the cytoplasm. It carries out the reaction chorismate = 4-hydroxybenzoate + pyruvate. Its pathway is cofactor biosynthesis; ubiquinone biosynthesis. Functionally, removes the pyruvyl group from chorismate, with concomitant aromatization of the ring, to provide 4-hydroxybenzoate (4HB) for the ubiquinone pathway. In Shewanella amazonensis (strain ATCC BAA-1098 / SB2B), this protein is Probable chorismate pyruvate-lyase.